We begin with the raw amino-acid sequence, 329 residues long: Basic leucine zipper 61 (329 aa).

Disordered stretches follow at residues 1 to 22 (MAQL…FSSQ) and 98 to 204 (DDVH…HDPK). Polar residues predominate over residues 10-22 (TMTTPNWPDFSSQ). Residues 119-133 (PTRSSSNTSTPSDHN) are compositionally biased toward low complexity. The span at 139-154 (DNNKEAPPSDHDHHMD) shows a compositional bias: basic and acidic residues. Positions 155 to 169 (NNVANQNNAAGNNYN) are enriched in low complexity. A bZIP domain is found at 202 to 254 (DPKRVKRILANRQSAQRSRVRKLQYISELERSVTSLQTEVSVLSPRVAFLDHQ). The tract at residues 204–223 (KRVKRILANRQSAQRSRVRK) is basic motif. The segment at 230 to 251 (LERSVTSLQTEVSVLSPRVAFL) is leucine-zipper. A compositionally biased stretch (polar residues) spans 304–313 (KMENNVSDQS). A disordered region spans residues 304–329 (KMENNVSDQSPADIKPSVEKEQLLNV). Residues 319 to 329 (PSVEKEQLLNV) show a composition bias toward basic and acidic residues.

As to quaternary structure, forms heterodimers with BZIP18, BZIP43 and VIP1/BZIP51.

It is found in the nucleus. Its function is as follows. Transcriptional activator. The polypeptide is Basic leucine zipper 61 (Arabidopsis thaliana (Mouse-ear cress)).